Consider the following 469-residue polypeptide: ATP synthase subunit beta (469 aa).

ATP is bound at residue 155–162 (GGAGVGKT).

Belongs to the ATPase alpha/beta chains family. In terms of assembly, F-type ATPases have 2 components, CF(1) - the catalytic core - and CF(0) - the membrane proton channel. CF(1) has five subunits: alpha(3), beta(3), gamma(1), delta(1), epsilon(1). CF(0) has three main subunits: a(1), b(2) and c(9-12). The alpha and beta chains form an alternating ring which encloses part of the gamma chain. CF(1) is attached to CF(0) by a central stalk formed by the gamma and epsilon chains, while a peripheral stalk is formed by the delta and b chains.

The protein resides in the cell inner membrane. The enzyme catalyses ATP + H2O + 4 H(+)(in) = ADP + phosphate + 5 H(+)(out). Produces ATP from ADP in the presence of a proton gradient across the membrane. The catalytic sites are hosted primarily by the beta subunits. The chain is ATP synthase subunit beta from Syntrophobacter fumaroxidans (strain DSM 10017 / MPOB).